A 113-amino-acid polypeptide reads, in one-letter code: Protein FMC1 homolog (113 aa).

The segment at 94–113 (SAGLVGLKLPHQPGGKGWEP) is disordered.

The protein belongs to the FMC1 family. In terms of assembly, interacts with ATPAF2.

Its subcellular location is the mitochondrion. Its function is as follows. Plays a role in the assembly/stability of the mitochondrial membrane ATP synthase (F(1)F(0) ATP synthase or Complex V). This is Protein FMC1 homolog from Homo sapiens (Human).